Reading from the N-terminus, the 311-residue chain is MLLSLIFPIAVLGEKFDGYGPTAFDVSLSPDIPLGELTGYGKKHFKERENKGFGDLSLVDFNMETEDSFDRSKLVDIGWDLLDSSHGTVMTVQSIRKGEADALSMKVLGHYEVLNLSEGSSNVQEAPITYLPIVFDTLVLDHKKSGYIRDPENDKIIYASWAMFEHKKTKRWFTVVNVDMYSAYSEKTDVQMASILKDMSKEHTIDSNPVFFMGRINAVSDKLQKVIDDKYTNPLDVDRNAKEAPRFTMKNLPDILGNFQRDFVLVRDAASQMVRVNYARILRRGIPTLHYPIHAIVSFETGDKQLTPPAA.

An N-terminal signal peptide occupies residues 1 to 13 (MLLSLIFPIAVLG). N-linked (GlcNAc...) asparagine glycosylation occurs at N115.

It is found in the secreted. This is an uncharacterized protein from Encephalitozoon cuniculi (strain GB-M1) (Microsporidian parasite).